The sequence spans 512 residues: MATVGSLKPLHHSSCSSSFPRNPIVNRKALLGFVFDSARKNQIRCENLRYSSESDGKRRNAAAKKRNQSPERCAAEGVLTGGGGSEAIAEVRTMMPERIKVVILTACMMCLCNADRVVMSVAVVPLADKLGWSSSFLGVVQSSFLWGYIFSSVIGGALVDRYGGKRVLAWGVALWSLATLLTPWAAAHSTLALLCVRAFFGLAEGVAMPSMTTLLSRWFPMDERASAVGISMAGFHMGNVVGLLLTPLMLSSIGISGPFILFASLGLLWVSTWSSGVTNNPQDSPFITRSELRLIQAGKPVQPSTISPKPNPSLRLLLSKLPTWAIIFANVTNNWGYFVLLSWMPVYFQTVFNVNLKQAAWFSALPWATMAISGYYAGAASDFLIRTGHSVTSVRKIMQSIGFMGPGLSLLCLNFAKSPSCAAVFMTIALSLSSFSQAGFLLNMQDIAPQYAGFLHGISNCAGTLAAIVSTIGTGYFVQWLGSFQAFLTVTAFLYFATTVFWLLFATGERVF.

The transit peptide at 1-44 (MATVGSLKPLHHSSCSSSFPRNPIVNRKALLGFVFDSARKNQIR) directs the protein to the chloroplast. The next 12 membrane-spanning stretches (helical) occupy residues 102–124 (VILTACMMCLCNADRVVMSVAVV), 139–159 (VVQSSFLWGYIFSSVIGGALV), 167–187 (VLAWGVALWSLATLLTPWAAA), 191–211 (LALLCVRAFFGLAEGVAMPSM), 228–248 (VGISMAGFHMGNVVGLLLTPL), 250–270 (LSSIGISGPFILFASLGLLWV), 324–344 (WAIIFANVTNNWGYFVLLSWM), 359–379 (AAWFSALPWATMAISGYYAGA), 396–416 (KIMQSIGFMGPGLSLLCLNFA), 422–442 (AAVFMTIALSLSSFSQAGFLL), 462–482 (AGTLAAIVSTIGTGYFVQWLG), and 486–506 (AFLTVTAFLYFATTVFWLLFA).

The protein belongs to the major facilitator superfamily. Sodium/anion cotransporter (TC 2.A.1.14) family. In terms of tissue distribution, expressed in roots.

The protein localises to the plastid. It localises to the chloroplast membrane. Functionally, inorganic phosphate and probable anion transporter. The sequence is that of Probable anion transporter 3, chloroplastic (ANTR3) from Arabidopsis thaliana (Mouse-ear cress).